The sequence spans 300 residues: GTPase Era (300 aa).

Positions H5 to V172 constitute an Era-type G domain. The interval G13–S20 is G1. Residue G13 to S20 coordinates GTP. A G2 region spans residues Q39–N43. The segment at D60–G63 is G3. GTP-binding positions include D60–I64 and N122–D125. The tract at residues N122 to D125 is G4. A G5 region spans residues I151–A153. The 78-residue stretch at T203–K280 folds into the KH type-2 domain.

The protein belongs to the TRAFAC class TrmE-Era-EngA-EngB-Septin-like GTPase superfamily. Era GTPase family. Monomer.

It is found in the cytoplasm. The protein resides in the cell membrane. Functionally, an essential GTPase that binds both GDP and GTP, with rapid nucleotide exchange. Plays a role in 16S rRNA processing and 30S ribosomal subunit biogenesis and possibly also in cell cycle regulation and energy metabolism. This chain is GTPase Era, found in Lacticaseibacillus paracasei (strain ATCC 334 / BCRC 17002 / CCUG 31169 / CIP 107868 / KCTC 3260 / NRRL B-441) (Lactobacillus paracasei).